The chain runs to 451 residues: Gamma-aminobutyric acid receptor subunit alpha-2 (451 aa).

The signal sequence occupies residues 1–28; the sequence is MKTKLNSSNMQLLLFVFLAWDPARLVLA. The Extracellular segment spans residues 29-249; that stretch reads NIQEDEAKNN…MTAHFHLKRK (221 aa). N-linked (GlcNAc...) asparagine glycosylation occurs at Asn38. A 4-aminobutanoate-binding site is contributed by Arg94. An N-linked (GlcNAc...) asparagine glycan is attached at Asn138. Residue Thr157 participates in 4-aminobutanoate binding. Cys166 and Cys180 form a disulfide bridge. An N-linked (GlcNAc...) asparagine glycan is attached at Asn201. Residues 250 to 270 traverse the membrane as a helical segment; sequence IGYFVIQTYLPCIMTVILSQV. At 271–280 the chain is on the cytoplasmic side; it reads SFWLNRESVP. A helical transmembrane segment spans residues 281–300; the sequence is ARTVFGVTTVLTMTTLSISA. Residues 301–311 lie on the Extracellular side of the membrane; the sequence is RNSLPKVAYAT. The helical transmembrane segment at 312–332 threads the bilayer; it reads AMDWFIAVCYAFVFSALIEFA. The Cytoplasmic segment spans residues 333-420; sequence TVNYFTKRGW…FNSVSKIDRM (88 aa). A helical transmembrane segment spans residues 421–441; the sequence is SRIVFPVLFGTFNLVYWATYL. Residues 442–451 lie on the Extracellular side of the membrane; it reads NREPVLGVSP.

The protein belongs to the ligand-gated ion channel (TC 1.A.9) family. Gamma-aminobutyric acid receptor (TC 1.A.9.5) subfamily. GABRA2 sub-subfamily. As to quaternary structure, heteropentamer, formed by a combination of alpha (GABRA1-6), beta (GABRB1-3), gamma (GABRG1-3), delta (GABRD), epsilon (GABRE), rho (GABRR1-3), pi (GABRP) and theta (GABRQ) subunits, each subunit exhibiting distinct physiological and pharmacological properties. Interacts with UBQLN1. Interacts with KIF21B. Interacts with LHFPL4. Interacts with SHISA7; interaction leads to the regulation of GABA(A) receptor trafficking, channel deactivation kinetics and pharmacology. Post-translationally, glycosylated.

The protein localises to the postsynaptic cell membrane. Its subcellular location is the cell membrane. It is found in the cytoplasmic vesicle membrane. The protein resides in the cell projection. It localises to the dendrite. The enzyme catalyses chloride(in) = chloride(out). With respect to regulation, activated by pentobarbital. Inhibited by the antagonist bicuculline. In terms of biological role, alpha subunit of the heteropentameric ligand-gated chloride channel gated by gamma-aminobutyric acid (GABA), a major inhibitory neurotransmitter in the brain. GABA-gated chloride channels, also named GABA(A) receptors (GABAAR), consist of five subunits arranged around a central pore and contain GABA active binding site(s) located at the alpha and beta subunit interface(s). When activated by GABA, GABAARs selectively allow the flow of chloride anions across the cell membrane down their electrochemical gradient. Chloride influx into the postsynaptic neuron following GABAAR opening decreases the neuron ability to generate a new action potential, thereby reducing nerve transmission. The alpha-2 subunit exhibits synaptogenic activity together with beta-2 and very little to no activity together with beta-3, the gamma-2 subunit being necessary but not sufficient to induce rapid synaptic contacts formation. This chain is Gamma-aminobutyric acid receptor subunit alpha-2 (GABRA2), found in Bos taurus (Bovine).